Consider the following 1305-residue polypeptide: Myosin-IIIb (1305 aa).

The 267-residue stretch at 15–281 (WEIIETIGKG…VTHLLDHPFI (267 aa)) folds into the Protein kinase domain. ATP is bound by residues 21 to 29 (IGKGTYGKV) and Lys-44. Asp-144 (proton acceptor) is an active-site residue. One can recognise a Myosin motor domain in the interval 331–1046 (CLEDDLVNLE…HVEQLNLLLR (716 aa)). The interval 927–949 (LMDLLSKMVVGQPHFIRCIKPND) is actin-binding. IQ domains are found at residues 1048 to 1077 (VMGR…KREK) and 1075 to 1104 (REKG…RRSE). Disordered stretches follow at residues 1093–1164 (RKLK…VTSG) and 1200–1233 (SPCE…MLSS).

It in the C-terminal section; belongs to the TRAFAC class myosin-kinesin ATPase superfamily. Myosin family. The protein in the N-terminal section; belongs to the protein kinase superfamily. STE Ser/Thr protein kinase family. Interacts (via C-terminus) with ESPN. Interacts (via C-terminus) with ESPNL. Expressed in the cochlear hair cells (at protein level). Expressed in utricle hair bundles (at protein level).

It is found in the cytoplasm. The protein resides in the cytoskeleton. Its subcellular location is the cell projection. It localises to the stereocilium. It catalyses the reaction L-seryl-[protein] + ATP = O-phospho-L-seryl-[protein] + ADP + H(+). The enzyme catalyses L-threonyl-[protein] + ATP = O-phospho-L-threonyl-[protein] + ADP + H(+). Its function is as follows. Probable actin-based motor with a protein kinase activity. Required for normal cochlear hair bundle development and hearing. Plays an important role in the early steps of cochlear hair bundle morphogenesis. Influences the number and lengths of stereocilia to be produced and limits the growth of microvilli within the forming auditory hair bundles thereby contributing to the architecture of the hair bundle, including its staircase pattern. Involved in the elongation of actin in stereocilia tips by transporting the actin regulatory factor ESPN to the plus ends of actin filaments. The sequence is that of Myosin-IIIb (Myo3b) from Mus musculus (Mouse).